We begin with the raw amino-acid sequence, 379 residues long: Succinyl-diaminopimelate desuccinylase (379 aa).

A Zn(2+)-binding site is contributed by His-70. Asp-72 is a catalytic residue. Zn(2+) is bound at residue Asp-103. Glu-137 functions as the Proton acceptor in the catalytic mechanism. Zn(2+) contacts are provided by Glu-138, Glu-166, and His-352.

The protein belongs to the peptidase M20A family. DapE subfamily. In terms of assembly, homodimer. The cofactor is Zn(2+). Co(2+) is required as a cofactor.

The enzyme catalyses N-succinyl-(2S,6S)-2,6-diaminopimelate + H2O = (2S,6S)-2,6-diaminopimelate + succinate. Its pathway is amino-acid biosynthesis; L-lysine biosynthesis via DAP pathway; LL-2,6-diaminopimelate from (S)-tetrahydrodipicolinate (succinylase route): step 3/3. In terms of biological role, catalyzes the hydrolysis of N-succinyl-L,L-diaminopimelic acid (SDAP), forming succinate and LL-2,6-diaminopimelate (DAP), an intermediate involved in the bacterial biosynthesis of lysine and meso-diaminopimelic acid, an essential component of bacterial cell walls. The chain is Succinyl-diaminopimelate desuccinylase from Shewanella sp. (strain W3-18-1).